Reading from the N-terminus, the 664-residue chain is Macoilin (664 aa).

The next 4 membrane-spanning stretches (helical) occupy residues 28–48 (TFLY…DFVL), 75–95 (AFSV…LLFI), 120–140 (VCLP…AIRF), and 154–174 (FAAH…KSYV). Positions 253-265 (REKGKEKDKDAKK) are enriched in basic and acidic residues. The segment at 253–274 (REKGKEKDKDAKKHNLGINNNN) is disordered. Ser305 is subject to Phosphoserine. The span at 320 to 348 (KNYKNASGVVNSSPRSHSATNGSIPSSSS) shows a compositional bias: polar residues. The disordered stretch occupies residues 320-375 (KNYKNASGVVNSSPRSHSATNGSIPSSSSKNEKKQKCTSKSPSTHKDLMENCIPNN). N-linked (GlcNAc...) asparagine glycosylation occurs at Asn324. The residue at position 332 (Ser332) is a Phosphoserine. 2 N-linked (GlcNAc...) asparagine glycosylation sites follow: Asn340 and Asn452. Residues 630–664 (TSPLSPVSPHYSSKFVETSPSGLDPNASVYQPLKK) form a disordered region. Phosphoserine occurs at positions 631 and 634. N-linked (GlcNAc...) asparagine glycosylation is present at Asn655.

It belongs to the macoilin family.

It is found in the rough endoplasmic reticulum membrane. The protein localises to the nucleus membrane. In terms of biological role, plays a role in the regulation of neuronal activity. The sequence is that of Macoilin (MACO1) from Macaca mulatta (Rhesus macaque).